Reading from the N-terminus, the 278-residue chain is Rhomboid protease GlpG (278 aa).

6 helical membrane-spanning segments follow: residues 94-114 (AGPL…LMLI), 143-163 (AFLH…WYLG), 175-195 (LLVL…LFSG), 196-216 (ANFG…WLTG), 224-241 (ISLP…LIAG), and 245-267 (ILGL…LMAF). The active-site Nucleophile is the serine 202. The active site involves histidine 255.

Belongs to the peptidase S54 family.

Its subcellular location is the cell inner membrane. It catalyses the reaction Cleaves type-1 transmembrane domains using a catalytic dyad composed of serine and histidine that are contributed by different transmembrane domains.. In terms of biological role, rhomboid-type serine protease that catalyzes intramembrane proteolysis. The polypeptide is Rhomboid protease GlpG (Yersinia pseudotuberculosis serotype I (strain IP32953)).